The chain runs to 414 residues: Multifunctional CCA protein (414 aa).

Glycine 8 and arginine 11 together coordinate ATP. The CTP site is built by glycine 8 and arginine 11. Aspartate 21 and aspartate 23 together coordinate Mg(2+). ATP-binding residues include arginine 91, arginine 137, and arginine 140. Arginine 91, arginine 137, and arginine 140 together coordinate CTP. Residues 228–329 (TGIHTLMTLA…LKLFDAVDVW (102 aa)) enclose the HD domain.

Belongs to the tRNA nucleotidyltransferase/poly(A) polymerase family. Bacterial CCA-adding enzyme type 1 subfamily. Monomer. Can also form homodimers and oligomers. Mg(2+) serves as cofactor. Ni(2+) is required as a cofactor.

It catalyses the reaction a tRNA precursor + 2 CTP + ATP = a tRNA with a 3' CCA end + 3 diphosphate. The catalysed reaction is a tRNA with a 3' CCA end + 2 CTP + ATP = a tRNA with a 3' CCACCA end + 3 diphosphate. In terms of biological role, catalyzes the addition and repair of the essential 3'-terminal CCA sequence in tRNAs without using a nucleic acid template. Adds these three nucleotides in the order of C, C, and A to the tRNA nucleotide-73, using CTP and ATP as substrates and producing inorganic pyrophosphate. tRNA 3'-terminal CCA addition is required both for tRNA processing and repair. Also involved in tRNA surveillance by mediating tandem CCA addition to generate a CCACCA at the 3' terminus of unstable tRNAs. While stable tRNAs receive only 3'-terminal CCA, unstable tRNAs are marked with CCACCA and rapidly degraded. The polypeptide is Multifunctional CCA protein (Serratia proteamaculans (strain 568)).